A 1012-amino-acid polypeptide reads, in one-letter code: Ankyrin repeat- and BTB/POZ domain-containing protein 3-B (1012 aa).

Residues 160-180 (ILSWTISVNCIAASLSALSMY) traverse the membrane as a helical segment. ANK repeat units lie at residues 511 to 540 (QGMTPLMYACVRGDEAMVQMLLDAGADINS), 557 to 586 (RQATPLTFAVLHQHIPVVQLLLDAGANVEG), and 595 to 624 (YTETPLQLASAAGNFELVSLLLERGADPMI). A BTB domain is found at 831–897 (SDVTFLVEGK…LYCGGTDALH (67 aa)).

It is found in the membrane. The sequence is that of Ankyrin repeat- and BTB/POZ domain-containing protein 3-B (abtb3b) from Danio rerio (Zebrafish).